The following is a 308-amino-acid chain: UPF0282 protein SSO3251 (308 aa).

This sequence belongs to the UPF0282 family.

The protein is UPF0282 protein SSO3251 of Saccharolobus solfataricus (strain ATCC 35092 / DSM 1617 / JCM 11322 / P2) (Sulfolobus solfataricus).